The sequence spans 648 residues: Transcription initiation factor TFIID subunit 5 (648 aa).

Low complexity predominate over residues 1-13 (MDSENSSSHSISS). The tract at residues 1-21 (MDSENSSSHSISSPQMFQNTH) is disordered. The 33-residue stretch at 35–67 (MNNESLQMIIGYLRRNGLTETEELLTREAGPVL) folds into the LisH domain. WD repeat units follow at residues 317–358 (NAPI…KKLR), 392–431 (GHGG…NAVI), 433–472 (RTPA…PLRI), 475–514 (DPYG…RVRI), 517–556 (GHKA…LVAA), and 560–599 (EQAG…GTVL).

This sequence belongs to the WD repeat TAF5 family. As to quaternary structure, component of the TFIID basal transcription factor complex, composed of TATA-box-binding protein tbp-1, and a number of TBP-associated factors (TAFs).

It is found in the nucleus. Its function is as follows. The TFIID basal transcription factor complex plays a major role in the initiation of RNA polymerase II (Pol II)-dependent transcription. TFIID recognizes and binds promoters via its subunit tbp-1, a TATA-box-binding protein, and promotes assembly of the pre-initiation complex (PIC). The TFIID complex consists of tbp-1 and TBP-associated factors (TAFs), including taf-5. Essential for early embryonic development, but not required for transcription of some genes; probably acts via activating transcription initiation by RNA Pol II, as part of the TFIID complex. This chain is Transcription initiation factor TFIID subunit 5, found in Caenorhabditis elegans.